The following is a 203-amino-acid chain: GTP cyclohydrolase 1 (203 aa).

Residues Cys87, His90, and Cys158 each coordinate Zn(2+).

Belongs to the GTP cyclohydrolase I family. In terms of assembly, homomer.

The catalysed reaction is GTP + H2O = 7,8-dihydroneopterin 3'-triphosphate + formate + H(+). It participates in cofactor biosynthesis; 7,8-dihydroneopterin triphosphate biosynthesis; 7,8-dihydroneopterin triphosphate from GTP: step 1/1. In Xylella fastidiosa (strain M23), this protein is GTP cyclohydrolase 1.